Reading from the N-terminus, the 685-residue chain is Sulfate transporter 4.1, chloroplastic (685 aa).

The N-terminal 23 residues, methionine 1–serine 23, are a transit peptide targeting the chloroplast. Over residues valine 15–leucine 26 the composition is skewed to low complexity. Residues valine 15–serine 53 are disordered. The next 12 helical transmembrane spans lie at leucine 97–alanine 117, leucine 122–glycine 142, leucine 147–alanine 167, isoleucine 175–leucine 195, phenylalanine 203–serine 223, tryptophan 255–glycine 275, phenylalanine 283–phenylalanine 303, threonine 332–alanine 352, leucine 369–glycine 389, leucine 406–phenylalanine 426, leucine 434–leucine 454, and leucine 473–isoleucine 493. An STAS domain is found at glutamine 518–cysteine 642.

It belongs to the SLC26A/SulP transporter (TC 2.A.53) family. As to expression, expressed both in roots and leaves.

The protein resides in the plastid. It localises to the chloroplast membrane. Its function is as follows. H(+)/sulfate cotransporter that may play a role in the regulation of sulfate assimilation. This chain is Sulfate transporter 4.1, chloroplastic (SULTR4;1), found in Arabidopsis thaliana (Mouse-ear cress).